Reading from the N-terminus, the 535-residue chain is Light-independent protochlorophyllide reductase subunit B (535 aa).

Residue D36 participates in [4Fe-4S] cluster binding. The active-site Proton donor is D292. Residue 428–429 (GL) participates in substrate binding.

The protein belongs to the ChlB/BchB/BchZ family. As to quaternary structure, protochlorophyllide reductase is composed of three subunits; BchL, BchN and BchB. Forms a heterotetramer of two BchB and two BchN subunits. The cofactor is [4Fe-4S] cluster.

The enzyme catalyses chlorophyllide a + oxidized 2[4Fe-4S]-[ferredoxin] + 2 ADP + 2 phosphate = protochlorophyllide a + reduced 2[4Fe-4S]-[ferredoxin] + 2 ATP + 2 H2O. The protein operates within porphyrin-containing compound metabolism; bacteriochlorophyll biosynthesis (light-independent). Its function is as follows. Component of the dark-operative protochlorophyllide reductase (DPOR) that uses Mg-ATP and reduced ferredoxin to reduce ring D of protochlorophyllide (Pchlide) to form chlorophyllide a (Chlide). This reaction is light-independent. The NB-protein (BchN-BchB) is the catalytic component of the complex. This chain is Light-independent protochlorophyllide reductase subunit B, found in Chlorobaculum parvum (strain DSM 263 / NCIMB 8327) (Chlorobium vibrioforme subsp. thiosulfatophilum).